The chain runs to 316 residues: Erythritol catabolism regulatory protein EryD (316 aa).

Residues 23 to 42 (QSAVAKRLGLPSVKAHRLIA) constitute a DNA-binding region (H-T-H motif).

It belongs to the SorC transcriptional regulatory family.

With respect to regulation, erythritol may act as an inducer, probably by binding to EryD and inhibiting its repressor activity. Represses the expression of the eryABCD operon, which is involved in erythritol catabolism. This is Erythritol catabolism regulatory protein EryD from Brucella abortus (strain 2308).